The sequence spans 231 residues: 7-cyano-7-deazaguanine synthase (231 aa).

8-18 serves as a coordination point for ATP; that stretch reads FSGGQDSTTCL. 4 residues coordinate Zn(2+): C188, C197, C200, and C203.

The protein belongs to the QueC family. It depends on Zn(2+) as a cofactor.

The enzyme catalyses 7-carboxy-7-deazaguanine + NH4(+) + ATP = 7-cyano-7-deazaguanine + ADP + phosphate + H2O + H(+). It functions in the pathway purine metabolism; 7-cyano-7-deazaguanine biosynthesis. Catalyzes the ATP-dependent conversion of 7-carboxy-7-deazaguanine (CDG) to 7-cyano-7-deazaguanine (preQ(0)). The sequence is that of 7-cyano-7-deazaguanine synthase from Escherichia coli O1:K1 / APEC.